Here is a 360-residue protein sequence, read N- to C-terminus: MKPSIISKLDSLNERYEELEALLGDASVISDQDKFRAYSKEYSQLEEVVKTFSRWKQLNSNIEEAELLLDDPEMKEMAQMEIEESKNELEEVEQHLQILLLPRDPNDEYNAYLEIRAGTGGDEAGIFAGDLFRMYSRYAEMKRWRVEVLSENESEQGGYKEIIALVSGDNVYGQLKFESGGHRVQRVPKTESQGRIHTSACTVAVMPELPESEMPEINPADLRIDTYRASGAGGQHINKTDSAVRITHIPTGMVVECQDERSQHKNKAKALAVLASRLVQAEQDKLAAEQATTRRNLLGSGDRSDKIRTYNYPQGRVTDHRINLTVYRLDEVMNGKIDELIQPIITEYQADQLAALSDQP.

Gln235 carries the post-translational modification N5-methylglutamine.

Belongs to the prokaryotic/mitochondrial release factor family. Post-translationally, methylated by PrmC. Methylation increases the termination efficiency of RF1.

It is found in the cytoplasm. Peptide chain release factor 1 directs the termination of translation in response to the peptide chain termination codons UAG and UAA. This is Peptide chain release factor 1 from Mannheimia succiniciproducens (strain KCTC 0769BP / MBEL55E).